The following is a 332-amino-acid chain: 2,3-diketo-L-gulonate reductase (332 aa).

The Proton donor role is filled by H44. Residues 168 to 174 (ITMVDMS), 224 to 225 (WK), and 304 to 306 (GHE) each bind NAD(+).

The protein belongs to the LDH2/MDH2 oxidoreductase family. DlgD subfamily. As to quaternary structure, homodimer.

It localises to the cytoplasm. It carries out the reaction 3-dehydro-L-gulonate + NAD(+) = 2,3-dioxo-L-gulonate + NADH + H(+). The catalysed reaction is 3-dehydro-L-gulonate + NADP(+) = 2,3-dioxo-L-gulonate + NADPH + H(+). Catalyzes the reduction of 2,3-diketo-L-gulonate in the presence of NADH, to form 3-keto-L-gulonate. The polypeptide is 2,3-diketo-L-gulonate reductase (Escherichia coli (strain K12 / MC4100 / BW2952)).